Consider the following 199-residue polypeptide: dTTP/UTP pyrophosphatase (199 aa).

The active-site Proton acceptor is D79.

It belongs to the Maf family. YhdE subfamily. A divalent metal cation is required as a cofactor.

It is found in the cytoplasm. It carries out the reaction dTTP + H2O = dTMP + diphosphate + H(+). It catalyses the reaction UTP + H2O = UMP + diphosphate + H(+). Its function is as follows. Nucleoside triphosphate pyrophosphatase that hydrolyzes dTTP and UTP. May have a dual role in cell division arrest and in preventing the incorporation of modified nucleotides into cellular nucleic acids. This Porphyromonas gingivalis (strain ATCC 33277 / DSM 20709 / CIP 103683 / JCM 12257 / NCTC 11834 / 2561) protein is dTTP/UTP pyrophosphatase.